Here is a 295-residue protein sequence, read N- to C-terminus: Maintenance of mitochondrial morphology protein 1 (295 aa).

Residues 1–12 are Lumenal-facing; the sequence is MVQLFHLTFTQG. The helical transmembrane segment at 13–33 threads the bilayer; it reads FFIGQLSVIVIVYIFLRFFLF. Over 34-295 the chain is Cytoplasmic; that stretch reads CTKEELKNVQ…REGHRQKSTE (262 aa). The 198-residue stretch at 81–278 folds into the SMP-LTD domain; it reads EEESLDWFNV…SPQFQQISIP (198 aa).

It belongs to the MMM1 family. As to quaternary structure, homodimer. Component of the ER-mitochondria encounter structure (ERMES) or MDM complex, composed of mmm1, mdm10, mdm12 and mdm34. A mmm1 homodimer associates with one molecule of mdm12 on each side in a pairwise head-to-tail manner, and the SMP-LTD domains of mmm1 and mdm12 generate a continuous hydrophobic tunnel for phospholipid trafficking.

The protein resides in the endoplasmic reticulum membrane. In terms of biological role, component of the ERMES/MDM complex, which serves as a molecular tether to connect the endoplasmic reticulum (ER) and mitochondria. Components of this complex are involved in the control of mitochondrial shape and protein biogenesis, and function in nonvesicular lipid trafficking between the ER and mitochondria. The mdm12-mmm1 subcomplex functions in the major beta-barrel assembly pathway that is responsible for biogenesis of all outer membrane beta-barrel proteins, and acts in a late step after the SAM complex. The mdm10-mdm12-mmm1 subcomplex further acts in the TOM40-specific pathway after the action of the mdm12-mmm1 complex. Essential for establishing and maintaining the structure of mitochondria and maintenance of mtDNA nucleoids. The sequence is that of Maintenance of mitochondrial morphology protein 1 from Schizosaccharomyces japonicus (strain yFS275 / FY16936) (Fission yeast).